The primary structure comprises 99 residues: UPF0122 protein UUR10_0158 (99 aa).

It belongs to the UPF0122 family.

Might take part in the signal recognition particle (SRP) pathway. This is inferred from the conservation of its genetic proximity to ftsY/ffh. May be a regulatory protein. This is UPF0122 protein UUR10_0158 from Ureaplasma urealyticum serovar 10 (strain ATCC 33699 / Western).